Here is a 382-residue protein sequence, read N- to C-terminus: uncharacterized protein (382 aa).

A PE domain is found at 1-92 (MQFLSVIPEQ…GATAYRNTEF (92 aa)). Helical transmembrane passes span 23-43 (SALSASYAAAAGPTTAVVSAA), 155-175 (AAVAPLPSAGAGLAQVVNGVV), 203-223 (FIVAGQSALTGVALLQPAVVG), 230-250 (TFLTAGTSAATGLGLLTLAGV), 261-281 (LASGTAATGLGLLGSAGVQLF), 284-304 (AFLLAVPTALGGVGSLAIAVV), 315-335 (LVVPNVVAGIAALQTAGAQFA), and 347-367 (LGAPGIAVLQTAGGHFAQGIG).

Belongs to the mycobacterial PE family.

Its subcellular location is the cell membrane. This is an uncharacterized protein from Mycobacterium bovis (strain ATCC BAA-935 / AF2122/97).